We begin with the raw amino-acid sequence, 198 residues long: DnaJ homolog subfamily C member 12 (198 aa).

The residue at position 1 (Met1) is an N-acetylmethionine. The 66-residue stretch at 14–79 folds into the J domain; sequence DYYTLLGCDE…ESRARYDHWR (66 aa). A disordered region spans residues 121-183; sequence TNTAQNKERS…CGHLHFRWSG (63 aa). The segment covering 126–156 has biased composition (basic and acidic residues); the sequence is NKERSEQRETKQGDPDSTPEKMMQKESESPE. Phosphoserine occurs at positions 160, 166, and 182.

Interacts with HSPA8. Interacts with TPH1. Interacts with TPH2.

It is found in the cytoplasm. Functionally, probable co-chaperone that participates in the proper folding of biopterin-dependent aromatic amino acid hydroxylases, which include phenylalanine-4-hydroxylase (PAH), tyrosine 3-monooxygenase (TH) and peripheral and neuronal tryptophan hydroxylases (TPH1 and TPH2). The protein is DnaJ homolog subfamily C member 12 (Dnajc12) of Rattus norvegicus (Rat).